A 131-amino-acid polypeptide reads, in one-letter code: Small ribosomal subunit protein uS8 (131 aa).

Belongs to the universal ribosomal protein uS8 family. Part of the 30S ribosomal subunit. Contacts proteins S5 and S12.

One of the primary rRNA binding proteins, it binds directly to 16S rRNA central domain where it helps coordinate assembly of the platform of the 30S subunit. In Phocaeicola vulgatus (strain ATCC 8482 / DSM 1447 / JCM 5826 / CCUG 4940 / NBRC 14291 / NCTC 11154) (Bacteroides vulgatus), this protein is Small ribosomal subunit protein uS8.